We begin with the raw amino-acid sequence, 289 residues long: MPSAPTELRDCPAPAKLNLFLHVVGRRPDGYHLLQTVFQLIDWCDTLHFGRRADGRLVRTTDIPGVPADEDLVIRAARLLQAETGCAYGADIALEKRLPMGGGIGGGSSDAATALLALNRLWGLDLPRAKLMSLGLRLGADVPFFLFGQNAFAEGIGEALTPIALPPATFVVIHPRVHVPTPEIFSDEGLTRNTPLTIITDFPDQQIVFAYGRNDLQAVAERKYGEIARALAWLRQFSPLARMTGSGACVFAPFDRAEQAQAVADQVPSEWEGRCAAGLTHHPLAMFAV.

Residue Lys-16 is part of the active site. ATP is bound at residue 99-109 (PMGGGIGGGSS). Asp-141 is an active-site residue.

This sequence belongs to the GHMP kinase family. IspE subfamily.

It carries out the reaction 4-CDP-2-C-methyl-D-erythritol + ATP = 4-CDP-2-C-methyl-D-erythritol 2-phosphate + ADP + H(+). The protein operates within isoprenoid biosynthesis; isopentenyl diphosphate biosynthesis via DXP pathway; isopentenyl diphosphate from 1-deoxy-D-xylulose 5-phosphate: step 3/6. In terms of biological role, catalyzes the phosphorylation of the position 2 hydroxy group of 4-diphosphocytidyl-2C-methyl-D-erythritol. The polypeptide is 4-diphosphocytidyl-2-C-methyl-D-erythritol kinase (Ralstonia nicotianae (strain ATCC BAA-1114 / GMI1000) (Ralstonia solanacearum)).